We begin with the raw amino-acid sequence, 656 residues long: Bifunctional protein ThiO/ThiG (656 aa).

Residues 1–395 (MQTTSDVLII…HAAENSEGSK (395 aa)) are thiO. Residues 7 to 21 (VLIIGGGIIGLAIAV) and 48 to 50 (AGM) contribute to the FAD site. Residue Glu-56 participates in glycine binding. Val-169 lines the FAD pocket. Glycine-binding residues include Arg-298 and Arg-324. Position 322-328 (322-328 (HYRNGIL)) interacts with FAD. The tract at residues 396–656 (DLLEIAGRKF…ASSPLTGLVG (261 aa)) is thiG. The Schiff-base intermediate with DXP role is filled by Lys-498. 1-deoxy-D-xylulose 5-phosphate is bound by residues Gly-559, 585–586 (AG), and 607–608 (NS).

The protein in the N-terminal section; belongs to the DAO family. ThiO subfamily. This sequence in the C-terminal section; belongs to the ThiG family. As to quaternary structure, interacts with ThiH and ThiS. Requires FAD as cofactor.

Its subcellular location is the cytoplasm. The catalysed reaction is glycine + O2 + H2O = glyoxylate + H2O2 + NH4(+). It carries out the reaction [ThiS sulfur-carrier protein]-C-terminal-Gly-aminoethanethioate + 2-iminoacetate + 1-deoxy-D-xylulose 5-phosphate = [ThiS sulfur-carrier protein]-C-terminal Gly-Gly + 2-[(2R,5Z)-2-carboxy-4-methylthiazol-5(2H)-ylidene]ethyl phosphate + 2 H2O + H(+). The protein operates within cofactor biosynthesis; thiamine diphosphate biosynthesis. Its function is as follows. Catalyzes the FAD-dependent oxidative deamination of glycine. Is essential for thiamine biosynthesis since the oxidation of glycine catalyzed by ThiO generates the glycine imine intermediate (dehydroglycine) required for the biosynthesis of the thiazole ring of thiamine pyrophosphate. Catalyzes the rearrangement of 1-deoxy-D-xylulose 5-phosphate (DXP) to produce the thiazole phosphate moiety of thiamine. Sulfur is provided by the thiocarboxylate moiety of the carrier protein ThiS. In vitro, sulfur can be provided by H(2)S. The protein is Bifunctional protein ThiO/ThiG (thiO/thiG) of Synechocystis sp. (strain ATCC 27184 / PCC 6803 / Kazusa).